The sequence spans 380 residues: 1-deoxy-D-xylulose 5-phosphate reductoisomerase (380 aa).

Positions 10, 11, 12, 13, 35, and 121 each coordinate NADPH. Lysine 122 lines the 1-deoxy-D-xylulose 5-phosphate pocket. Glutamate 123 contributes to the NADPH binding site. Mn(2+) is bound at residue aspartate 147. 4 residues coordinate 1-deoxy-D-xylulose 5-phosphate: serine 148, glutamate 149, serine 173, and histidine 196. Glutamate 149 is a Mn(2+) binding site. Glycine 202 provides a ligand contact to NADPH. 1-deoxy-D-xylulose 5-phosphate-binding residues include serine 209, asparagine 214, lysine 215, and glutamate 218. Position 218 (glutamate 218) interacts with Mn(2+).

It belongs to the DXR family. Requires Mg(2+) as cofactor. Mn(2+) serves as cofactor.

It catalyses the reaction 2-C-methyl-D-erythritol 4-phosphate + NADP(+) = 1-deoxy-D-xylulose 5-phosphate + NADPH + H(+). Its pathway is isoprenoid biosynthesis; isopentenyl diphosphate biosynthesis via DXP pathway; isopentenyl diphosphate from 1-deoxy-D-xylulose 5-phosphate: step 1/6. Its function is as follows. Catalyzes the NADPH-dependent rearrangement and reduction of 1-deoxy-D-xylulose-5-phosphate (DXP) to 2-C-methyl-D-erythritol 4-phosphate (MEP). The sequence is that of 1-deoxy-D-xylulose 5-phosphate reductoisomerase from Lachnospira eligens (strain ATCC 27750 / DSM 3376 / VPI C15-48 / C15-B4) (Eubacterium eligens).